Reading from the N-terminus, the 780-residue chain is Lon protease (780 aa).

The Lon N-terminal domain maps to 11 to 204; sequence IPVLPLRDVV…RLMAIMESEI (194 aa). An ATP-binding site is contributed by 356–363; the sequence is GPPGVGKT. The Lon proteolytic domain occupies 592–773; it reads KNQIGQVIGL…KEVLNLSLEN (182 aa). Catalysis depends on residues Ser-679 and Lys-722.

It belongs to the peptidase S16 family. Homohexamer. Organized in a ring with a central cavity.

The protein resides in the cytoplasm. The enzyme catalyses Hydrolysis of proteins in presence of ATP.. In terms of biological role, ATP-dependent serine protease that mediates the selective degradation of mutant and abnormal proteins as well as certain short-lived regulatory proteins. Required for cellular homeostasis and for survival from DNA damage and developmental changes induced by stress. Degrades polypeptides processively to yield small peptide fragments that are 5 to 10 amino acids long. Binds to DNA in a double-stranded, site-specific manner. In Buchnera aphidicola subsp. Baizongia pistaciae (strain Bp), this protein is Lon protease.